Reading from the N-terminus, the 242-residue chain is Large ribosomal subunit protein uL3 (242 aa).

Gln151 carries the post-translational modification N5-methylglutamine.

Belongs to the universal ribosomal protein uL3 family. Part of the 50S ribosomal subunit. Forms a cluster with proteins L14 and L19. In terms of processing, methylated by PrmB.

Its function is as follows. One of the primary rRNA binding proteins, it binds directly near the 3'-end of the 23S rRNA, where it nucleates assembly of the 50S subunit. The polypeptide is Large ribosomal subunit protein uL3 (Zymomonas mobilis subsp. mobilis (strain ATCC 31821 / ZM4 / CP4)).